A 784-amino-acid polypeptide reads, in one-letter code: Protein translocase subunit SecA 2 (784 aa).

Residues Gln-94, 112 to 116 (GEGKT), and Asp-501 contribute to the ATP site.

It belongs to the SecA family. As to quaternary structure, monomer and homodimer. Part of the essential Sec protein translocation apparatus which comprises SecA, SecYEG and auxiliary proteins SecDF. Other proteins may also be involved.

The protein localises to the cell membrane. Its subcellular location is the cytoplasm. It catalyses the reaction ATP + H2O + cellular proteinSide 1 = ADP + phosphate + cellular proteinSide 2.. Its function is as follows. Part of the Sec protein translocase complex. Interacts with the SecYEG preprotein conducting channel. Has a central role in coupling the hydrolysis of ATP to the transfer of proteins into and across the cell membrane, serving as an ATP-driven molecular motor driving the stepwise translocation of polypeptide chains across the membrane. The polypeptide is Protein translocase subunit SecA 2 (Mycolicibacterium smegmatis (strain ATCC 700084 / mc(2)155) (Mycobacterium smegmatis)).